Reading from the N-terminus, the 265-residue chain is Probable ribose-5-phosphate isomerase 2 (265 aa).

Alanine 2 bears the N-acetylalanine mark. Position 96 is a phosphoserine (serine 96).

This sequence belongs to the ribose 5-phosphate isomerase family.

The protein localises to the cytoplasm. The catalysed reaction is aldehydo-D-ribose 5-phosphate = D-ribulose 5-phosphate. The protein operates within carbohydrate degradation; pentose phosphate pathway; D-ribose 5-phosphate from D-ribulose 5-phosphate (non-oxidative stage): step 1/1. Functionally, catalyzes the reversible conversion of ribose-5-phosphate to ribulose 5-phosphate. This chain is Probable ribose-5-phosphate isomerase 2 (RPI2), found in Arabidopsis thaliana (Mouse-ear cress).